We begin with the raw amino-acid sequence, 431 residues long: Enolase (431 aa).

Q163 serves as a coordination point for (2R)-2-phosphoglycerate. E205 (proton donor) is an active-site residue. 3 residues coordinate Mg(2+): D242, E288, and D315. Positions 340, 369, 370, and 391 each coordinate (2R)-2-phosphoglycerate. K340 acts as the Proton acceptor in catalysis.

It belongs to the enolase family. The cofactor is Mg(2+).

It is found in the cytoplasm. The protein localises to the secreted. The protein resides in the cell surface. It carries out the reaction (2R)-2-phosphoglycerate = phosphoenolpyruvate + H2O. Its pathway is carbohydrate degradation; glycolysis; pyruvate from D-glyceraldehyde 3-phosphate: step 4/5. Functionally, catalyzes the reversible conversion of 2-phosphoglycerate (2-PG) into phosphoenolpyruvate (PEP). It is essential for the degradation of carbohydrates via glycolysis. The chain is Enolase from Bacillus mycoides (strain KBAB4) (Bacillus weihenstephanensis).